The primary structure comprises 193 residues: Major structural subunit of bundle-forming pilus (193 aa).

Positions 1 to 13 are excised as a propeptide; that stretch reads MVSKIMNKKYEKG. Leu-14 bears the N-methylleucine mark. A helical membrane pass occupies residues 14–35; it reads LSLIESAMVLALAATVTAGVMF. Cysteines 129 and 179 form a disulfide.

The protein belongs to the N-Me-Phe pilin family. 10 to 100 laterally aligned filaments or bundle-forming pili coalesce into rope-like bundles. These form linkages between the bacteria within the enteropathogenic E.coli (EPEC) microcolonies that are attached to epithelial cells.

It localises to the fimbrium. It is found in the membrane. Its function is as follows. Major repeating bundle-forming pilus (BFP) subunit. Is required for EPEC localized adherence. The protein is Major structural subunit of bundle-forming pilus (bfpA) of Escherichia coli O111:H-.